Here is a 217-residue protein sequence, read N- to C-terminus: Small ribosomal subunit protein uS3 (217 aa).

Positions 38-106 (VRKYIETALK…RVHINIIEIK (69 aa)) constitute a KH type-2 domain.

It belongs to the universal ribosomal protein uS3 family. In terms of assembly, part of the 30S ribosomal subunit. Forms a tight complex with proteins S10 and S14.

Binds the lower part of the 30S subunit head. Binds mRNA in the 70S ribosome, positioning it for translation. The chain is Small ribosomal subunit protein uS3 from Lysinibacillus sphaericus (strain C3-41).